The sequence spans 157 residues: Crossover junction endodeoxyribonuclease RuvC (157 aa).

Catalysis depends on residues aspartate 7, glutamate 67, and aspartate 140. Positions 7, 67, and 140 each coordinate Mg(2+).

The protein belongs to the RuvC family. In terms of assembly, homodimer which binds Holliday junction (HJ) DNA. The HJ becomes 2-fold symmetrical on binding to RuvC with unstacked arms; it has a different conformation from HJ DNA in complex with RuvA. In the full resolvosome a probable DNA-RuvA(4)-RuvB(12)-RuvC(2) complex forms which resolves the HJ. It depends on Mg(2+) as a cofactor.

Its subcellular location is the cytoplasm. It carries out the reaction Endonucleolytic cleavage at a junction such as a reciprocal single-stranded crossover between two homologous DNA duplexes (Holliday junction).. The RuvA-RuvB-RuvC complex processes Holliday junction (HJ) DNA during genetic recombination and DNA repair. Endonuclease that resolves HJ intermediates. Cleaves cruciform DNA by making single-stranded nicks across the HJ at symmetrical positions within the homologous arms, yielding a 5'-phosphate and a 3'-hydroxyl group; requires a central core of homology in the junction. The consensus cleavage sequence is 5'-(A/T)TT(C/G)-3'. Cleavage occurs on the 3'-side of the TT dinucleotide at the point of strand exchange. HJ branch migration catalyzed by RuvA-RuvB allows RuvC to scan DNA until it finds its consensus sequence, where it cleaves and resolves the cruciform DNA. The protein is Crossover junction endodeoxyribonuclease RuvC of Rickettsia rickettsii (strain Iowa).